Here is a 417-residue protein sequence, read N- to C-terminus: NADH-quinone oxidoreductase subunit D (417 aa).

The protein belongs to the complex I 49 kDa subunit family. In terms of assembly, NDH-1 is composed of 14 different subunits. Subunits NuoB, C, D, E, F, and G constitute the peripheral sector of the complex.

The protein localises to the cell inner membrane. The enzyme catalyses a quinone + NADH + 5 H(+)(in) = a quinol + NAD(+) + 4 H(+)(out). In terms of biological role, NDH-1 shuttles electrons from NADH, via FMN and iron-sulfur (Fe-S) centers, to quinones in the respiratory chain. The immediate electron acceptor for the enzyme in this species is believed to be ubiquinone. Couples the redox reaction to proton translocation (for every two electrons transferred, four hydrogen ions are translocated across the cytoplasmic membrane), and thus conserves the redox energy in a proton gradient. This is NADH-quinone oxidoreductase subunit D from Acidovorax sp. (strain JS42).